We begin with the raw amino-acid sequence, 122 residues long: Small ribosomal subunit protein uS13 (122 aa).

The interval 93 to 122 is disordered; it reads RRGLPVRGQRTKTNARTRKGPKKTIAGKKK.

It belongs to the universal ribosomal protein uS13 family. As to quaternary structure, part of the 30S ribosomal subunit. Forms a loose heterodimer with protein S19. Forms two bridges to the 50S subunit in the 70S ribosome.

Functionally, located at the top of the head of the 30S subunit, it contacts several helices of the 16S rRNA. In the 70S ribosome it contacts the 23S rRNA (bridge B1a) and protein L5 of the 50S subunit (bridge B1b), connecting the 2 subunits; these bridges are implicated in subunit movement. Contacts the tRNAs in the A and P-sites. The sequence is that of Small ribosomal subunit protein uS13 from Corynebacterium jeikeium (strain K411).